Consider the following 81-residue polypeptide: Photosystem I iron-sulfur center (81 aa).

2 4Fe-4S ferredoxin-type domains span residues 2 to 31 and 39 to 68; these read SHFV…MIPW and IASA…VRVY. [4Fe-4S] cluster-binding residues include cysteine 11, cysteine 14, cysteine 17, cysteine 21, cysteine 48, cysteine 51, cysteine 54, and cysteine 58.

In terms of assembly, the eukaryotic PSI reaction center is composed of at least 11 subunits. It depends on [4Fe-4S] cluster as a cofactor.

The protein resides in the plastid thylakoid membrane. The enzyme catalyses reduced [plastocyanin] + hnu + oxidized [2Fe-2S]-[ferredoxin] = oxidized [plastocyanin] + reduced [2Fe-2S]-[ferredoxin]. Apoprotein for the two 4Fe-4S centers FA and FB of photosystem I (PSI); essential for photochemical activity. FB is the terminal electron acceptor of PSI, donating electrons to ferredoxin. The C-terminus interacts with PsaA/B/D and helps assemble the protein into the PSI complex. Required for binding of PsaD and PsaE to PSI. PSI is a plastocyanin-ferredoxin oxidoreductase, converting photonic excitation into a charge separation, which transfers an electron from the donor P700 chlorophyll pair to the spectroscopically characterized acceptors A0, A1, FX, FA and FB in turn. The protein is Photosystem I iron-sulfur center of Cuscuta exaltata (Tall dodder).